Here is a 725-residue protein sequence, read N- to C-terminus: MESLPIVLLSLISKAVVLICSLLTLIIQNSTAVTWGLACVWLAYVSFRFLFQVKITVHPAARETFESMVRKFQAESMFSEEATPCIVSVGDKDADLTPDPQREDIKIVKSSRRVSYAVRVAHVAKAQVGLLANSRANELVYSRLCREEMVKHGVRPSHIAHMVPLAVAACFIPLDSDFLAASIRQGEGMRERRALLGPSWEKXGGLLVTSGFTTPTWRGDPRGMLVTKGPPLAKPRKLYRFTGMGTHIRYGVHDHSLGNVRRGLVERLYMVEVKGELQPTPKPTPGAFNQMSRFSDRLSIHLPKTTRLTPREFLGFYTGRKLERYQKAVESLEMHPVREKDAWLSTFVKAEKLNITAKPDPAPRVIQPRDPRYNVEVGRFLRHSEEMLFKAINKTFGGRTIFKGLSSDQAGEEFKTLWDSFKDPVGIGMDASRFDQHISKDALEFEHKMWLSMFPKSERAELARLLSWQINNRGLARCPDGEIRYRVEGCRMSGDMNTSSGNCYIMCATVHNWCDNIKHIKHFRLANNGDDCMLVVERSDEKKVRNGLIEYYATLGFTMKVEPTVDVLERLEFCQTRPVLVDGKYRMVRNLHQSMSKDLHSLHDLDSSAARNAWVTAVGTGGRCMNDGVPVLKEFFKQFPDYNLEVKKGSDMAQKLRDDWKYKFNRTAAFQDLIPTQESRYSFWLAFGLLPDEQIALENGFSPLKMEIVNEQIQEETSLLQFSGA.

The region spanning 424-544 is the RdRp catalytic domain; it reads PVGIGMDASR…VVERSDEKKV (121 aa).

It belongs to the tombusviridae RNA polymerase family.

It catalyses the reaction RNA(n) + a ribonucleoside 5'-triphosphate = RNA(n+1) + diphosphate. In terms of biological role, RNA-dependent RNA polymerase that plays an essential role in the virus replication. The protein is RNA-directed RNA polymerase of Chenopodium amaranticolor (Quinoa).